Reading from the N-terminus, the 77-residue chain is EMBRYO SURROUNDING FACTOR 1-like protein 6 (77 aa).

Residues 1–25 (MSPSHFAILFIIVISLVPLHGYANG) form the signal peptide. Disulfide bonds link Cys-38-Cys-53, Cys-43-Cys-72, Cys-51-Cys-68, and Cys-54-Cys-61.

Belongs to the MEG family.

The polypeptide is EMBRYO SURROUNDING FACTOR 1-like protein 6 (ESFL6) (Arabidopsis thaliana (Mouse-ear cress)).